The sequence spans 1187 residues: DNA-directed RNA polymerase subunit beta (1187 aa).

It belongs to the RNA polymerase beta chain family. The RNAP catalytic core consists of 2 alpha, 1 beta, 1 beta' and 1 omega subunit. When a sigma factor is associated with the core the holoenzyme is formed, which can initiate transcription.

It carries out the reaction RNA(n) + a ribonucleoside 5'-triphosphate = RNA(n+1) + diphosphate. In terms of biological role, DNA-dependent RNA polymerase catalyzes the transcription of DNA into RNA using the four ribonucleoside triphosphates as substrates. The chain is DNA-directed RNA polymerase subunit beta from Petrotoga mobilis (strain DSM 10674 / SJ95).